Reading from the N-terminus, the 225-residue chain is MSDIFPESHPEHPLNLIPELCRKFYDLGWATGTGGGISIKMGENYYIAPSGVQKERIMPNEIFVLNASQDVVEEPRTEKQLKISECTPLFFNAYRLRGAGACLHTHSANCVLISLLCDREFRISHIEMIKGIINNETKKALGFRDTLVVPIIENTDFEKDLTASMAECMVRYPESCAVLVRRHGMYVWSDTWQKAKGAVECIDYLMGLAIRMRTLGLEWEPKGAK.

Cys86 contacts substrate. The Zn(2+) site is built by His104 and His106. Glu127 functions as the Proton donor/acceptor in the catalytic mechanism. Residue His183 participates in Zn(2+) binding.

It belongs to the aldolase class II family. MtnB subfamily. It depends on Zn(2+) as a cofactor.

The protein resides in the cytoplasm. It carries out the reaction 5-(methylsulfanyl)-D-ribulose 1-phosphate = 5-methylsulfanyl-2,3-dioxopentyl phosphate + H2O. It participates in amino-acid biosynthesis; L-methionine biosynthesis via salvage pathway; L-methionine from S-methyl-5-thio-alpha-D-ribose 1-phosphate: step 2/6. In terms of biological role, catalyzes the dehydration of methylthioribulose-1-phosphate (MTRu-1-P) into 2,3-diketo-5-methylthiopentyl-1-phosphate (DK-MTP-1-P). In Leishmania infantum, this protein is Probable methylthioribulose-1-phosphate dehydratase.